The chain runs to 319 residues: L-threo-3-hydroxyaspartate ammonia-lyase (319 aa).

Position 53 is an N6-(pyridoxal phosphate)lysine (Lys-53). Residues Asn-80, 179 to 183 (GGGGM), and Thr-304 contribute to the pyridoxal 5'-phosphate site.

The protein belongs to the serine/threonine dehydratase family. May be either a monomer or a homodimer. Pyridoxal 5'-phosphate serves as cofactor. The cofactor is Mn(2+). Requires Mg(2+) as cofactor. Ca(2+) is required as a cofactor.

It catalyses the reaction (3S)-3-hydroxy-L-aspartate = oxaloacetate + NH4(+). With respect to regulation, is strongly inhibited by hydroxylamine and EDTA in vitro. Functionally, catalyzes the deamination of L-threo-3-hydroxyaspartate to oxaloacetate and ammonia. Shows a high specificity towards L-threo-3-hydroxyaspartate as other 3-hydroxyaminoacids, i.e. D,L-erythro- and D-threo-3-hydroxyaspartate, D-threonine, L-threonine, D,L-allothreonine, D,L-threo-3-phenylserine, D-serine, and L-serine, are not substrates for this enzyme. Exhibits no detectable serine and aspartate racemase activity. Might play a role in the detoxification of naturally occurring 3-hydroxyaspartate in Pseudomonas sp. T62 cells. The sequence is that of L-threo-3-hydroxyaspartate ammonia-lyase from Pseudomonas sp.